Consider the following 1150-residue polypeptide: Fl(2)d-associated complex component (1150 aa).

Residues 1–10 (MEKKAKESLR) show a composition bias toward basic and acidic residues. Disordered stretches follow at residues 1 to 444 (MEKK…EEER), 477 to 710 (QGRE…PPPL), 833 to 914 (ASED…MDTN), and 1034 to 1053 (KEQG…AKIP). Residues 11 to 20 (RYKKAARHSA) show a composition bias toward basic residues. The span at 21 to 44 (THSSSSDSTSDSDSGSSSYSSTDS) shows a compositional bias: low complexity. The span at 47-69 (GVGGVGVGVGVPGGAGGPGGSGS) shows a compositional bias: gly residues. Residues 72–97 (GHPHTHGHGHHPRSAERHHRKKKSSR) show a composition bias toward basic residues. The segment covering 98-107 (RGGSSSGDEP) has biased composition (low complexity). Basic residues-rich tracts occupy residues 110 to 144 (SRRK…KKRA) and 162 to 175 (AKLK…RLRA). Residues 122-147 (KKLVAKRNHIKRKLKEARLKKRAAAA) adopt a coiled-coil conformation. Positions 176 to 199 (ASKEQRERDKLRVVQRDRERDHHR) are enriched in basic and acidic residues. Positions 202-215 (SSRSPPSSSTTTTT) are enriched in low complexity. Residues 269–347 (PSLERERERE…KLRRQEEEEG (79 aa)) are a coiled coil. Basic and acidic residues-rich tracts occupy residues 270-414 (SLER…DEMR), 428-444 (YAPR…EEER), and 492-529 (PDER…PEWE). Over residues 537–558 (AGGGPGGPSGTPGRPGGFVGGP) the composition is skewed to gly residues. Composition is skewed to basic and acidic residues over residues 589–611 (ERER…DRPD) and 630–640 (WLEHDQREKPR). Positions 660–669 (PPAPSHPHPA) are enriched in pro residues. Basic and acidic residues predominate over residues 693-702 (GHGDHGERPG). A compositionally biased stretch (low complexity) spans 851 to 861 (QSLNLNQSLSS). Acidic residues predominate over residues 879–889 (ELSEISDSDDD). Residues 890 to 903 (ILNKTDKVRPKNEL) show a composition bias toward basic and acidic residues. Residues 905–914 (TETEQEMDTN) show a composition bias toward acidic residues.

This sequence belongs to the ZC3H13 family. Component of the WMM complex, a N6-methyltransferase complex composed of a catalytic subcomplex, named MAC, and of an associated subcomplex, named MACOM. The MAC subcomplex is composed of Ime4/Mettl3 and Mettl14. The MACOM subcomplex is composed of fl(2)d, Flacc/Xio, Hakai, vir, and, in some cases of nito. In terms of tissue distribution, widely expressed during embryogenesis but shows enrichment in the neuroectoderm.

The protein localises to the nucleus. Associated component of the WMM complex, a complex that mediates N6-methyladenosine (m6A) methylation of mRNAs, a modification that plays a role in the efficiency of mRNA splicing and is required for sex determination. In the WMM complex, acts as a key regulator of m6A methylation by bridging fl(2)d to the RNA-binding component nito. Required for sex determination and dosage compensation via Sxl alternative splicing: m6A methylation acts as a key regulator of Sxl pre-mRNA and promotes female-specific alternative splicing of Sxl, which determines female physiognomy. The polypeptide is Fl(2)d-associated complex component (Drosophila melanogaster (Fruit fly)).